The sequence spans 143 residues: Large ribosomal subunit protein uL11 (143 aa).

Belongs to the universal ribosomal protein uL11 family. In terms of assembly, part of the ribosomal stalk of the 50S ribosomal subunit. Interacts with L10 and the large rRNA to form the base of the stalk. L10 forms an elongated spine to which L12 dimers bind in a sequential fashion forming a multimeric L10(L12)X complex. In terms of processing, one or more lysine residues are methylated.

Its function is as follows. Forms part of the ribosomal stalk which helps the ribosome interact with GTP-bound translation factors. The polypeptide is Large ribosomal subunit protein uL11 (Laribacter hongkongensis (strain HLHK9)).